A 179-amino-acid polypeptide reads, in one-letter code: Cytochrome b6-f complex iron-sulfur subunit (179 aa).

Residues 20 to 42 (LLTFGTITGVAAGALYPIVKYFI) form a helical membrane-spanning segment. Residues 60 to 161 (GNDVIVSQFL…ANVTDNDKVV (102 aa)) enclose the Rieske domain. The [2Fe-2S] cluster site is built by C107, H109, C125, and H128. C112 and C127 form a disulfide bridge.

This sequence belongs to the Rieske iron-sulfur protein family. As to quaternary structure, the 4 large subunits of the cytochrome b6-f complex are cytochrome b6, subunit IV (17 kDa polypeptide, PetD), cytochrome f and the Rieske protein, while the 4 small subunits are PetG, PetL, PetM and PetN. The complex functions as a dimer. [2Fe-2S] cluster is required as a cofactor.

The protein localises to the cellular thylakoid membrane. The enzyme catalyses 2 oxidized [plastocyanin] + a plastoquinol + 2 H(+)(in) = 2 reduced [plastocyanin] + a plastoquinone + 4 H(+)(out). In terms of biological role, component of the cytochrome b6-f complex, which mediates electron transfer between photosystem II (PSII) and photosystem I (PSI), cyclic electron flow around PSI, and state transitions. The polypeptide is Cytochrome b6-f complex iron-sulfur subunit (Microcystis aeruginosa (strain NIES-843 / IAM M-2473)).